The following is a 693-amino-acid chain: Elongation factor G (693 aa).

In terms of domain architecture, tr-type G spans 8–282 (EKTRNIGIMA…AVIDYLPSPL (275 aa)). GTP is bound by residues 17 to 24 (AHIDAGKT), 81 to 85 (DTPGH), and 135 to 138 (NKMD).

Belongs to the TRAFAC class translation factor GTPase superfamily. Classic translation factor GTPase family. EF-G/EF-2 subfamily.

It is found in the cytoplasm. Functionally, catalyzes the GTP-dependent ribosomal translocation step during translation elongation. During this step, the ribosome changes from the pre-translocational (PRE) to the post-translocational (POST) state as the newly formed A-site-bound peptidyl-tRNA and P-site-bound deacylated tRNA move to the P and E sites, respectively. Catalyzes the coordinated movement of the two tRNA molecules, the mRNA and conformational changes in the ribosome. The protein is Elongation factor G of Staphylococcus aureus (strain Mu3 / ATCC 700698).